Consider the following 249-residue polypeptide: Ubiquinone/menaquinone biosynthesis C-methyltransferase UbiE (249 aa).

Residues Thr-72, Asp-93, and Asp-121 to Ala-122 contribute to the S-adenosyl-L-methionine site.

Belongs to the class I-like SAM-binding methyltransferase superfamily. MenG/UbiE family.

It catalyses the reaction a 2-demethylmenaquinol + S-adenosyl-L-methionine = a menaquinol + S-adenosyl-L-homocysteine + H(+). The catalysed reaction is a 2-methoxy-6-(all-trans-polyprenyl)benzene-1,4-diol + S-adenosyl-L-methionine = a 5-methoxy-2-methyl-3-(all-trans-polyprenyl)benzene-1,4-diol + S-adenosyl-L-homocysteine + H(+). Its pathway is quinol/quinone metabolism; menaquinone biosynthesis; menaquinol from 1,4-dihydroxy-2-naphthoate: step 2/2. It functions in the pathway cofactor biosynthesis; ubiquinone biosynthesis. Methyltransferase required for the conversion of demethylmenaquinol (DMKH2) to menaquinol (MKH2) and the conversion of 2-polyprenyl-6-methoxy-1,4-benzoquinol (DDMQH2) to 2-polyprenyl-3-methyl-6-methoxy-1,4-benzoquinol (DMQH2). The sequence is that of Ubiquinone/menaquinone biosynthesis C-methyltransferase UbiE from Teredinibacter turnerae (strain ATCC 39867 / T7901).